A 276-amino-acid polypeptide reads, in one-letter code: Pantothenate synthetase (276 aa).

Position 27-34 (27-34 (MGALHRGH)) interacts with ATP. H34 serves as the catalytic Proton donor. Residue Q58 coordinates (R)-pantoate. Q58 is a binding site for beta-alanine. Residue 147-150 (GKKD) coordinates ATP. Residue Q153 coordinates (R)-pantoate. ATP contacts are provided by residues V176 and 184–187 (LSSR).

Belongs to the pantothenate synthetase family. As to quaternary structure, homodimer.

It is found in the cytoplasm. The enzyme catalyses (R)-pantoate + beta-alanine + ATP = (R)-pantothenate + AMP + diphosphate + H(+). The protein operates within cofactor biosynthesis; (R)-pantothenate biosynthesis; (R)-pantothenate from (R)-pantoate and beta-alanine: step 1/1. Catalyzes the condensation of pantoate with beta-alanine in an ATP-dependent reaction via a pantoyl-adenylate intermediate. This Helicobacter pylori (strain J99 / ATCC 700824) (Campylobacter pylori J99) protein is Pantothenate synthetase.